Consider the following 229-residue polypeptide: Urease accessory protein UreF (229 aa).

It belongs to the UreF family. As to quaternary structure, ureD, UreF and UreG form a complex that acts as a GTP-hydrolysis-dependent molecular chaperone, activating the urease apoprotein by helping to assemble the nickel containing metallocenter of UreC. The UreE protein probably delivers the nickel.

Its subcellular location is the cytoplasm. Functionally, required for maturation of urease via the functional incorporation of the urease nickel metallocenter. This Alcanivorax borkumensis (strain ATCC 700651 / DSM 11573 / NCIMB 13689 / SK2) protein is Urease accessory protein UreF.